Here is a 609-residue protein sequence, read N- to C-terminus: DNA-directed RNA polymerase subunit beta' (609 aa).

Residues cysteine 67, cysteine 69, cysteine 82, and cysteine 85 each coordinate Zn(2+). Residues aspartate 460, aspartate 462, and aspartate 464 each contribute to the Mg(2+) site.

This sequence belongs to the RNA polymerase beta' chain family. RpoC1 subfamily. In terms of assembly, in plastids the minimal PEP RNA polymerase catalytic core is composed of four subunits: alpha, beta, beta', and beta''. When a (nuclear-encoded) sigma factor is associated with the core the holoenzyme is formed, which can initiate transcription. Mg(2+) is required as a cofactor. Zn(2+) serves as cofactor.

It localises to the plastid. The protein localises to the chloroplast. The enzyme catalyses RNA(n) + a ribonucleoside 5'-triphosphate = RNA(n+1) + diphosphate. Functionally, DNA-dependent RNA polymerase catalyzes the transcription of DNA into RNA using the four ribonucleoside triphosphates as substrates. This is DNA-directed RNA polymerase subunit beta' from Emiliania huxleyi (Coccolithophore).